A 364-amino-acid chain; its full sequence is Chorismate synthase (364 aa).

NADP(+) is bound by residues Arg48 and Arg54. Residues 125–127, 238–239, Gly278, 293–297, and Arg319 contribute to the FMN site; these read RSS, NA, and KPTSS.

This sequence belongs to the chorismate synthase family. As to quaternary structure, homotetramer. It depends on FMNH2 as a cofactor.

The enzyme catalyses 5-O-(1-carboxyvinyl)-3-phosphoshikimate = chorismate + phosphate. Its pathway is metabolic intermediate biosynthesis; chorismate biosynthesis; chorismate from D-erythrose 4-phosphate and phosphoenolpyruvate: step 7/7. Catalyzes the anti-1,4-elimination of the C-3 phosphate and the C-6 proR hydrogen from 5-enolpyruvylshikimate-3-phosphate (EPSP) to yield chorismate, which is the branch point compound that serves as the starting substrate for the three terminal pathways of aromatic amino acid biosynthesis. This reaction introduces a second double bond into the aromatic ring system. This is Chorismate synthase from Shewanella sediminis (strain HAW-EB3).